The primary structure comprises 558 residues: MRRMLSPRILLSSLPNASARKLFLIVLIIFVFWVVFMTSKDHTEFMVHLNNRIILRRWSIFKEFLHSEELKNTPASVEAELAVTAILEKLNQQIPPRPFQTHSSTTSAKQSTATIHNPQRTYCVGDQLNVLLVAKDYFGNRKEYGGDFLRARIFSPAMKAGTSGKVTDFNNGTYLVSFTLFWEGPVSLSILLMHPSEGVSALWRARNRGYGKIIFTGQFLNGTSPVLTECGLTLNTSAELCQYLDARDHEAFYCLKLPGVPCEALTHMTSKNSNISYLSLEEKLLFRRFNIGVEVVKNLSIVVSLCNNKTNKKKKKCQIGMETPSPGGYTLKGRWITAHCEQNEFRAIKDINNCLTRKLIYLMGDSTLRQWIYYLPKVVKTLKYFDRHGAGPFKTHILLDTERHIFVQWKKHSHPFVTNKLFSMKDDNYIPREIDQVAGDSGTAIVISFGQHFRPFPINVFIRRAINVKNAIERLFLRSPETKVIIKTENIREINEHVEIFSDFHGSIQNLIIRDIFRDLNVGIIDAWDMTVAYRSEDVHPPESVIESQIGMFLNYIC.

A helical membrane pass occupies residues 17–37 (ASARKLFLIVLIIFVFWVVFM).

The protein belongs to the NXPE family.

The protein localises to the membrane. The chain is NXPE family member 2 (Nxpe2) from Mus musculus (Mouse).